The following is a 525-amino-acid chain: GMP synthase [glutamine-hydrolyzing] (525 aa).

Residues 13-202 (TILVLDFGSQ…AVDLCHAKQN (190 aa)) enclose the Glutamine amidotransferase type-1 domain. Residue Cys-89 is the Nucleophile of the active site. Residues His-176 and Glu-178 contribute to the active site. The GMPS ATP-PPase domain maps to 203-400 (WTMENFIDTE…LGIPHDLVWR (198 aa)). An ATP-binding site is contributed by 231–237 (SGGVDST). Lys-241 is covalently cross-linked (Glycyl lysine isopeptide (Lys-Gly) (interchain with G-Cter in ubiquitin)). Arg-304 lines the XMP pocket. Lys-426 participates in a covalent cross-link: Glycyl lysine isopeptide (Lys-Gly) (interchain with G-Cter in ubiquitin). Residues Asp-462, Lys-517, and Glu-523 each contribute to the XMP site.

As to quaternary structure, homodimer. It depends on Mg(2+) as a cofactor.

Its subcellular location is the cytoplasm. It localises to the cytosol. The catalysed reaction is XMP + L-glutamine + ATP + H2O = GMP + L-glutamate + AMP + diphosphate + 2 H(+). Its pathway is purine metabolism; GMP biosynthesis; GMP from XMP (L-Gln route): step 1/1. Its function is as follows. Catalyzes the conversion of xanthine monophosphate (XMP) to GMP in the presence of glutamine and ATP through an adenyl-XMP intermediate. The polypeptide is GMP synthase [glutamine-hydrolyzing] (Saccharomyces cerevisiae (strain ATCC 204508 / S288c) (Baker's yeast)).